A 147-amino-acid polypeptide reads, in one-letter code: Hemoglobin subunit beta-M (147 aa).

Val-2 is subject to N-acetylvaline. Residues 3 to 147 (HLTSEEKNCI…VAHALAHKYH (145 aa)) form the Globin domain. Thr-13 carries the phosphothreonine modification. Ser-45 is subject to Phosphoserine. The residue at position 60 (Lys-60) is an N6-acetyllysine. His-64 provides a ligand contact to heme b. An N6-acetyllysine modification is found at Lys-83. His-93 serves as a coordination point for heme b. An S-nitrosocysteine modification is found at Cys-94. The residue at position 145 (Lys-145) is an N6-acetyllysine.

The protein belongs to the globin family. Heterotetramer of two alpha chains and two beta chains. In terms of tissue distribution, red blood cells.

Its function is as follows. Involved in oxygen transport from the lung to the various peripheral tissues. This chain is Hemoglobin subunit beta-M (HBB), found in Didelphis virginiana (North American opossum).